The sequence spans 373 residues: Saccharopine dehydrogenase [NAD(+), L-lysine-forming] (373 aa).

At A2 the chain carries N-acetylalanine; partial. L-saccharopine is bound by residues R18 and K77. The active-site Proton acceptor is K77. Residue H96 is the Proton donor of the active site. Position 101 (Q101) interacts with L-saccharopine. NAD(+) is bound at residue R130. R131 and F135 together coordinate L-saccharopine. NAD(+) is bound by residues 203 to 204 (GR), D227, T231, Y251, and V278. Cysteines 205 and 249 form a disulfide. 279 to 281 (SAD) contacts L-saccharopine. 318–321 (IDHL) serves as a coordination point for NAD(+). The Microbody targeting signal signature appears at 371-373 (SRL).

Belongs to the AlaDH/PNT family. Monomer.

Its subcellular location is the peroxisome. It catalyses the reaction L-saccharopine + NAD(+) + H2O = L-lysine + 2-oxoglutarate + NADH + H(+). It participates in amino-acid biosynthesis; L-lysine biosynthesis via AAA pathway; L-lysine from L-alpha-aminoadipate (fungal route): step 3/3. Its activity is regulated as follows. Inhibited by p-chloromercuribenzoate and iodoacetate by modification of the active site cysteine residue. Inhibited by diethyl pyrocarbonate by modification of histidine residues. Inhibited by pyridoxal 5'-phosphate by modification of an essential lysine residue. Catalyzes the NAD(+)-dependent cleavage of saccharopine to L-lysine and 2-oxoglutarate, the final step in the alpha-aminoadipate (AAA) pathway for lysine biosynthesis. In Saccharomyces cerevisiae (strain ATCC 204508 / S288c) (Baker's yeast), this protein is Saccharopine dehydrogenase [NAD(+), L-lysine-forming].